The primary structure comprises 745 residues: Junction plakoglobin (745 aa).

Residue M1 is modified to N-acetylmethionine. O-linked (GlcNAc) threonine glycosylation is present at T14. Phosphoserine occurs at positions 99 and 125. 12 ARM repeats span residues 132-171 (NYQD…QLSK), 172-215 (KEAS…LSHH), 216-255 (REGL…NLLL), 258-297 (EGAK…LLAY), 298-341 (GNQE…LSVC), 342-381 (PSNK…NLSD), 383-420 (ATKQ…NLTC), 423-464 (SKNK…HLTS), 470-510 (EMAQ…NLAL), 512-551 (PANH…QPYT), 574-613 (PMNR…ELAQ), and 615-661 (KEAA…PDYR). Positions 132–297 (NYQDDAELAT…TTDCLQLLAY (166 aa)) are interaction with DSC1 and DSG1. A Phosphoserine modification is found at S182. Residues 574-661 (PMNRMEIFRL…ISEDKNPDYR (88 aa)) form an interaction with DSC1 region. Phosphoserine is present on residues S665 and S730.

It belongs to the beta-catenin family. Homodimer. Component of an E-cadherin/catenin adhesion complex composed of at least E-cadherin/CDH1 and gamma-catenin/JUP, and possibly alpha-catenin/CTNNA1; the complex is located to adherens junctions. The stable association of CTNNA1 is controversial as CTNNA1 was shown not to bind to F-actin when assembled in the complex. Interacts with MUC1. Interacts with CAV1. Interacts with PTPRJ. Interacts with DSG1. Interacts with DSC1 and DSC2. Interacts with PKP2. Interacts with PKP3 (via N-terminus); the interaction is required for PKP3 localization to desmosome cell-cell junctions. Interacts with DSG4. May be phosphorylated by FER. Expressed in the mammary epithelium (at protein level).

The protein resides in the cell junction. It is found in the adherens junction. The protein localises to the desmosome. Its subcellular location is the cytoplasm. It localises to the cytoskeleton. The protein resides in the cell membrane. It is found in the nucleus. Common junctional plaque protein. The membrane-associated plaques are architectural elements in an important strategic position to influence the arrangement and function of both the cytoskeleton and the cells within the tissue. The presence of plakoglobin in both the desmosomes and in the intermediate junctions suggests that it plays a central role in the structure and function of submembranous plaques. Acts as a substrate for VE-PTP and is required by it to stimulate VE-cadherin function in endothelial cells. Can replace beta-catenin in E-cadherin/catenin adhesion complexes which are proposed to couple cadherins to the actin cytoskeleton. This Mus musculus (Mouse) protein is Junction plakoglobin.